Reading from the N-terminus, the 788-residue chain is MKDKSIKVLEFNKIQEILKNYTCTKAAKDIIEDLKPYDSVYEVREHLEEAKEAFKLLITKGAPPFEGVYDIRNGIYLAEKGSALLPGQLLKIAAVLRCARRFKEYINHKEEEESYRVLENICEGIFSLPKIEEEIFNAIEGEDEIADRASSTLYNIRRSLKEKNYSVRDKINSLVRSYSSYLQENIYTVRGDRYVLPVKAEHKGAVPGLVHDQSSTGATLFIEPMSLVNLNNEIKELMLKEKAEIERILTVLSAKINANITGVKTDANIVWELDFIFAKAKFASEYNCTCPTINNEGIVDIIEGRHPLIDRREVVPISVKLGEEFTSLMITGPNTGGKTVTLKTVGLIHLMAMSGLMIPARENSVISYFNNVFADIGDEQSIEQSLSTFSSHMKNIVEIMDKADENSLVLFDELGAGTDPTEGAALAISILENLRKRGTKIIATTHYSELKAYALRKEGVENASVEFDVETLRPTYRLLIGIPGKSNAFEISKRLGLPDYIIDFARENISNENIRFEELIENLQEKSIKAQEDARLAENLKLERDKEKKKYEEKLEGLQKVRDNALIDARREAKNIIKEAKEEADKILKDIRQLERMGYSSDARRKLEEERKKLKDKLDSIEEKEIKTVHKGEALKNVKEGDEVLLASINQKVIVLSKPDNKGDVLVQAGIMKITANIKDLRAAKGSNFNSSSSKIKKSKKLNLNLRRVESSVDLRGMDAEEAIYTVDKYLDEAYLGGLGEVTIVHGKGTGVLRKTIMDMLKGHSHVKRHRLGEYGEGGTGVTVVELK.

ATP is bound at residue 332–339; the sequence is GPNTGGKT. Positions 713 to 788 constitute a Smr domain; the sequence is VDLRGMDAEE…GTGVTVVELK (76 aa).

This sequence belongs to the DNA mismatch repair MutS family. MutS2 subfamily. In terms of assembly, homodimer. Binds to stalled ribosomes, contacting rRNA.

Endonuclease that is involved in the suppression of homologous recombination and thus may have a key role in the control of bacterial genetic diversity. Functionally, acts as a ribosome collision sensor, splitting the ribosome into its 2 subunits. Detects stalled/collided 70S ribosomes which it binds and splits by an ATP-hydrolysis driven conformational change. Acts upstream of the ribosome quality control system (RQC), a ribosome-associated complex that mediates the extraction of incompletely synthesized nascent chains from stalled ribosomes and their subsequent degradation. Probably generates substrates for RQC. This is Endonuclease MutS2 from Clostridium botulinum (strain Langeland / NCTC 10281 / Type F).